The following is a 156-amino-acid chain: 6,7-dimethyl-8-ribityllumazine synthase (156 aa).

5-amino-6-(D-ribitylamino)uracil-binding positions include Phe-22, 57-59 (AYE), and 81-83 (TVI). A (2S)-2-hydroxy-3-oxobutyl phosphate-binding site is contributed by 86–87 (GT). His-89 acts as the Proton donor in catalysis. Phe-114 provides a ligand contact to 5-amino-6-(D-ribitylamino)uracil. Position 128 (Arg-128) interacts with (2S)-2-hydroxy-3-oxobutyl phosphate.

It belongs to the DMRL synthase family. As to quaternary structure, forms an icosahedral capsid composed of 60 subunits, arranged as a dodecamer of pentamers.

It catalyses the reaction (2S)-2-hydroxy-3-oxobutyl phosphate + 5-amino-6-(D-ribitylamino)uracil = 6,7-dimethyl-8-(1-D-ribityl)lumazine + phosphate + 2 H2O + H(+). The protein operates within cofactor biosynthesis; riboflavin biosynthesis; riboflavin from 2-hydroxy-3-oxobutyl phosphate and 5-amino-6-(D-ribitylamino)uracil: step 1/2. Functionally, catalyzes the formation of 6,7-dimethyl-8-ribityllumazine by condensation of 5-amino-6-(D-ribitylamino)uracil with 3,4-dihydroxy-2-butanone 4-phosphate. This is the penultimate step in the biosynthesis of riboflavin. The protein is 6,7-dimethyl-8-ribityllumazine synthase of Salmonella heidelberg (strain SL476).